The following is a 295-amino-acid chain: Nucleotide-binding protein BPUM_3115 (295 aa).

Position 16–23 (Gly16–Thr23) interacts with ATP. Asp67–Gly70 lines the GTP pocket.

It belongs to the RapZ-like family.

Displays ATPase and GTPase activities. The polypeptide is Nucleotide-binding protein BPUM_3115 (Bacillus pumilus (strain SAFR-032)).